The chain runs to 849 residues: Probable ubiquitin carboxyl-terminal hydrolase 1 (849 aa).

The DUSP domain maps to 20-120 (QPASLPFQDS…EGLAIERKVL (101 aa)). Residues 279 to 848 (CGLYNLGNSC…SAYVLFYRAK (570 aa)) form the USP domain. C288 (nucleophile) is an active-site residue. H806 functions as the Proton acceptor in the catalytic mechanism.

This sequence belongs to the peptidase C19 family.

It carries out the reaction Thiol-dependent hydrolysis of ester, thioester, amide, peptide and isopeptide bonds formed by the C-terminal Gly of ubiquitin (a 76-residue protein attached to proteins as an intracellular targeting signal).. This chain is Probable ubiquitin carboxyl-terminal hydrolase 1 (ubp1), found in Schizosaccharomyces pombe (strain 972 / ATCC 24843) (Fission yeast).